Consider the following 231-residue polypeptide: Ribosyldihydronicotinamide dehydrogenase [quinone] (231 aa).

Residues H12 and 18 to 21 (FNGS) each bind FAD. The residue at position 80 (S80) is a Phosphoserine. 104–107 (LYWF) provides a ligand contact to FAD. 127–129 (FDI) serves as a coordination point for substrate. FAD-binding positions include 148-151 (TTGG) and Y156. Zn(2+) contacts are provided by H174 and H178. E194 contacts FAD. S197 carries the post-translational modification Phosphoserine. R201 lines the FAD pocket. Zn(2+) is bound at residue C223.

It belongs to the NAD(P)H dehydrogenase (quinone) family. As to quaternary structure, homodimer. It depends on Zn(2+) as a cofactor. FAD serves as cofactor.

The protein localises to the cytoplasm. It carries out the reaction 1-(beta-D-ribofuranosyl)-1,4-dihydronicotinamide + a quinone + H(+) = beta-nicotinamide D-riboside + a quinol. With respect to regulation, inhibited by melatonin, resveratrol and 5-hydroxytryptamine. In terms of biological role, the enzyme apparently serves as a quinone reductase in connection with conjugation reactions of hydroquinones involved in detoxification pathways as well as in biosynthetic processes such as the vitamin K-dependent gamma-carboxylation of glutamate residues in prothrombin synthesis. The chain is Ribosyldihydronicotinamide dehydrogenase [quinone] (NQO2) from Homo sapiens (Human).